The following is a 144-amino-acid chain: Peptide methionine sulfoxide reductase MsrB (144 aa).

In terms of domain architecture, MsrB spans 5–128; the sequence is QEELRQRIGH…NSAALDFIPY (124 aa). Catalysis depends on Cys-117, which acts as the Nucleophile.

It belongs to the MsrB Met sulfoxide reductase family.

It carries out the reaction L-methionyl-[protein] + [thioredoxin]-disulfide + H2O = L-methionyl-(R)-S-oxide-[protein] + [thioredoxin]-dithiol. The chain is Peptide methionine sulfoxide reductase MsrB from Streptococcus agalactiae serotype Ia (strain ATCC 27591 / A909 / CDC SS700).